A 290-amino-acid chain; its full sequence is 33 kDa chaperonin (290 aa).

2 cysteine pairs are disulfide-bonded: Cys235–Cys237 and Cys268–Cys271.

The protein belongs to the HSP33 family. Under oxidizing conditions two disulfide bonds are formed involving the reactive cysteines. Under reducing conditions zinc is bound to the reactive cysteines and the protein is inactive.

Its subcellular location is the cytoplasm. Its function is as follows. Redox regulated molecular chaperone. Protects both thermally unfolding and oxidatively damaged proteins from irreversible aggregation. Plays an important role in the bacterial defense system toward oxidative stress. This chain is 33 kDa chaperonin, found in Streptococcus equi subsp. zooepidemicus (strain MGCS10565).